The chain runs to 71 residues: Gas vesicle protein A (71 aa).

It belongs to the gas vesicle GvpA family. The gas vesicle shell is 2 nm thick and consists of a single layer of this protein. It forms helical ribs nearly perpendicular to the long axis of the vesicle.

The protein localises to the gas vesicle shell. Gas vesicles are hollow, gas filled proteinaceous nanostructures found in some microorganisms. During planktonic growth they allow positioning of the organism at a favorable depth for light or nutrient acquisition. GvpA forms the protein shell. Functionally, cluster expression in E.coli (gvpA1-gvpA2-gvpC-gvpN-gvpJ-gvpK-gvpF-gvpG-gvpV-gvpW) allows cells to float and produces irregularly shaped gas vesicles. The chain is Gas vesicle protein A from Nostoc sp. (strain PCC 7120 / SAG 25.82 / UTEX 2576).